The sequence spans 431 residues: Probable carboxylic ester hydrolase LipM (431 aa).

3 consecutive transmembrane segments (helical) span residues 7 to 27, 38 to 58, and 75 to 95; these read IHVI…AATI, FASL…LPTL, and PVRA…LNLS. Residues Ser261, Asp357, and His390 contribute to the active site.

It belongs to the 'GDXG' lipolytic enzyme family.

It localises to the membrane. The chain is Probable carboxylic ester hydrolase LipM from Mycobacterium tuberculosis (strain ATCC 25618 / H37Rv).